A 228-amino-acid chain; its full sequence is Prolactin (228 aa).

The N-terminal stretch at 1-29 (MCTKRSSLKGSLLLLLLISSLLLSRSVDS) is a signal peptide. The cysteines at positions 33 and 40 are disulfide-linked. Ser-55, Ser-63, and Ser-119 each carry phosphoserine. 2 cysteine pairs are disulfide-bonded: Cys-87/Cys-203 and Cys-220/Cys-228.

It belongs to the somatotropin/prolactin family. In terms of assembly, interacts with PRLR.

The protein resides in the secreted. In terms of biological role, prolactin acts primarily on the mammary gland by promoting lactation. In Isoodon macrourus (Short-nosed bandicoot), this protein is Prolactin (PRL).